The primary structure comprises 344 residues: MDVASAPGVSSHPPYYSKPICSSQSSLIRIPINKGCCFARSSNLITSLHAASRGVTRRTSGVQWCYRSIRFDPFKVNDKNSRTVTVRSDLSGAATPESTYPEPEIKLSSRLRGICFCLVAGVSAIVLIVLMITGHPFVLLFDRYRRKFHHFIAKLWASISIYPFYKTDIQGLENLPSSDTPCVYVSNHQSFLDIYTLLSLGQSYKFISKTGIFVIPVIGWAMSMMGVVPLKRMDPRSQVDCLKRCMELVKKGASVFFFPEGTRSKDGRLGPFKKGAFTIAAKTGVPVVPITLMGTGKIMPTGSEGILNHGDVRVIIHKPIYGSKADLLCDEARNKIAESMNLVS.

A chloroplast-targeting transit peptide spans 1-49 (MDVASAPGVSSHPPYYSKPICSSQSSLIRIPINKGCCFARSSNLITSLH). Residues 113–133 (GICFCLVAGVSAIVLIVLMIT) form a helical membrane-spanning segment. Positions 188 to 193 (HQSFLD) match the HXXXXD motif motif. Residues 210–230 (TGIFVIPVIGWAMSMMGVVPL) traverse the membrane as a helical segment.

This sequence belongs to the 1-acyl-sn-glycerol-3-phosphate acyltransferase family. In terms of tissue distribution, widely expressed.

It is found in the plastid. Its subcellular location is the chloroplast membrane. It carries out the reaction a fatty acyl-[ACP] + a 1-acyl-sn-glycero-3-phosphate = a 1,2-diacyl-sn-glycero-3-phosphate + holo-[ACP]. It catalyses the reaction a 1-acyl-sn-glycero-3-phosphate + an acyl-CoA = a 1,2-diacyl-sn-glycero-3-phosphate + CoA. It functions in the pathway phospholipid metabolism; CDP-diacylglycerol biosynthesis; CDP-diacylglycerol from sn-glycerol 3-phosphate: step 2/3. Functionally, plastidial enzyme of the prokaryotic glycerol-3-phosphate pathway that converts lysophosphatidic acid (LPA) into phosphatidic acid by incorporating an acyl moiety at position sn-2. Utilizes palmitoyl-ACP (16:0-ACP) to produce phosphatidic acid containing a saturated group at position sn-2, which is characteristic of lipids synthesized by the prokaryotic pathway. In vitro, can use 16:0-CoA as acyl donor. In Brassica napus (Rape), this protein is 1-acyl-sn-glycerol-3-phosphate acyltransferase BAT2, chloroplastic.